Here is a 600-residue protein sequence, read N- to C-terminus: ATP-dependent lipid A-core flippase (600 aa).

A run of 4 helical transmembrane segments spans residues 26 to 46 (VGIFLLSIIGFVIFASTQPML), 82 to 102 (LLIVLIAAWQGLGSFLGNYFL), 167 to 187 (VFLFIYLLMMNWKLTLVMLAI), and 266 to 286 (PMLQLVIYSAMAVLMFLVLFL). The region spanning 30 to 321 (LLSIIGFVIF…LSEVSSTIQK (292 aa)) is the ABC transmembrane type-1 domain. Residues 353-589 (LEVKNLSFFY…NGYYARLHAM (237 aa)) form the ABC transporter domain. Residue 387–394 (GRSGSGKS) participates in ATP binding.

The protein belongs to the ABC transporter superfamily. Lipid exporter (TC 3.A.1.106) family. Homodimer.

Its subcellular location is the cell inner membrane. It catalyses the reaction ATP + H2O + lipid A-core oligosaccharideSide 1 = ADP + phosphate + lipid A-core oligosaccharideSide 2.. Functionally, involved in lipopolysaccharide (LPS) biosynthesis. Translocates lipid A-core from the inner to the outer leaflet of the inner membrane. Transmembrane domains (TMD) form a pore in the inner membrane and the ATP-binding domain (NBD) is responsible for energy generation. In Pseudomonas savastanoi pv. phaseolicola (strain 1448A / Race 6) (Pseudomonas syringae pv. phaseolicola (strain 1448A / Race 6)), this protein is ATP-dependent lipid A-core flippase.